Here is a 322-residue protein sequence, read N- to C-terminus: UDP-N-acetylenolpyruvoylglucosamine reductase (322 aa).

Residues 36–202 enclose the FAD-binding PCMH-type domain; sequence RAGGPAQVLF…TSVLFEGVPG (167 aa). Residue arginine 182 is part of the active site. Serine 231 (proton donor) is an active-site residue. Glutamate 301 is an active-site residue.

Belongs to the MurB family. The cofactor is FAD.

The protein resides in the cytoplasm. It carries out the reaction UDP-N-acetyl-alpha-D-muramate + NADP(+) = UDP-N-acetyl-3-O-(1-carboxyvinyl)-alpha-D-glucosamine + NADPH + H(+). Its pathway is cell wall biogenesis; peptidoglycan biosynthesis. Cell wall formation. This Brucella canis (strain ATCC 23365 / NCTC 10854 / RM-666) protein is UDP-N-acetylenolpyruvoylglucosamine reductase.